The chain runs to 161 residues: UPF0262 protein Meso_0189 (161 aa).

Belongs to the UPF0262 family.

This chain is UPF0262 protein Meso_0189, found in Chelativorans sp. (strain BNC1).